The sequence spans 1778 residues: Internalin I (1778 aa).

The N-terminal stretch at 1-28 is a signal peptide; it reads MKKKFSIVIISVLLLGYLAPFDTLLVGA. The segment at 36–101 is disordered; the sequence is DTAVKTAEAD…NIKTEINTDK (66 aa). A compositionally biased stretch (acidic residues) spans 51–62; it reads IESETGSDDETA. Residues 63 to 88 are compositionally biased toward basic and acidic residues; that stretch reads EEPKEAKEAEASKETTEKEEKAKTEE. LRR repeat units follow at residues 155 to 179, 183 to 204, 205 to 227, 228 to 250, 251 to 272, 277 to 298, 299 to 321, 322 to 344, 345 to 367, 368 to 389, 390 to 412, 413 to 434, 435 to 456, 457 to 478, 479 to 500, 501 to 522, 523 to 544, 545 to 566, 567 to 588, 589 to 610, 611 to 632, 633 to 653, 657 to 678, 685 to 707, 708 to 729, 730 to 751, and 752 to 773; these read AISQLDLSGETGNDPTDISNIEGLQ, NLTSLNLSENNISDLAPLKDLV, NLVSLNLSSNRTLVNLSGVEDLV, NLQELNVSANKALEDISQVASLP, VLKEISAQGCNIKTLELKNPAG, ELETFYLQENDLTNLTSLAKLP, KLKNLYIKGNASLKSLETLNGAT, KLQLIDASNCTDLETLGDISGLS, ELEMIQLSGCSKLKEITSLKNLP, NLVNITADSCAIEDLGTLNNLP, KLQTLVLSDNENLTNITAITDLP, QLKTLTLDGCGITSIGTLDNLP, KLEKLDLKENQITSISEITDLP, RLSYLDVSVNNLTTIGDLKKLP, LLEWLNVSSNRLSDVSTLTNFP, SLNYINISNNVIRTVGKMTELP, SLKEFYAQNNSISDISMIHDMP, NLRKVDASNNLITNIGTFDNLP, KLQSLDVHSNRITSTSVIHDLP, SLETFNAQTNLITNIGTMDNLP, DLTYVNLSFNRIPSLAPIGDLP, NLETLIVSDNNSYLRSLGTMD, KLRILDLQNNYLNYTGTEGNLS, NLTELNLRNNVYIDDISGLSTLS, RLIYLNLDSNKIEDISALSNLT, NLQELTLENNKIENISALSDLE, and NLNKLVVSKNKIIDISPVANMV. The 88-residue stretch at 785–872 folds into the LRRCT domain; that stretch reads TYTLPTVLSY…SAAKVTADAE (88 aa). MucBP domains follow at residues 1510 to 1569, 1575 to 1634, and 1644 to 1705; these read DAAA…EQTV, AIKP…PQTI, and SKKS…SQTV. The tract at residues 1716 to 1742 is disordered; that stretch reads SKDDPKVKGKTNQPSSTDTKLKVDNNS. The span at 1725–1742 shows a compositional bias: polar residues; that stretch reads KTNQPSSTDTKLKVDNNS. An LPXTG sorting signal motif is present at residues 1743–1747; it reads LPATG. Position 1746 is a pentaglycyl murein peptidoglycan amidated threonine (Thr-1746). A propeptide spans 1747 to 1778 (removed by sortase); the sequence is GDTENMILAVLIGFNMLIVASIFLFRKPKTNQ.

The protein belongs to the internalin family.

It is found in the secreted. The protein localises to the cell wall. Its function is as follows. A role in virulence could not be demonstrated. This is Internalin I (inlI) from Listeria monocytogenes serovar 1/2a (strain ATCC BAA-679 / EGD-e).